The chain runs to 424 residues: Catabolic NAD-specific glutamate dehydrogenase RocG (424 aa).

Residues lysine 80 and lysine 104 each contribute to the substrate site. The active-site Proton donor is the lysine 116. NAD(+)-binding residues include threonine 200 and asparagine 231. Serine 358 is a substrate binding site.

The protein belongs to the Glu/Leu/Phe/Val dehydrogenases family. Homohexamer. Interacts with transcriptional regulator GltC.

The catalysed reaction is L-glutamate + NAD(+) + H2O = 2-oxoglutarate + NH4(+) + NADH + H(+). Devoted to catabolic function of glutamate (and other amino acids of the glutamate family) utilization as sole nitrogen source. It is not involved in anabolic function of glutamate biosynthesis since B.subtilis possesses only one route of glutamate biosynthesis from ammonia, catalyzed by glutamate synthase. Wild-type cells are unable to utilize glutamate or glutamine as a sole carbon source; thus RocG does not function physiologically to synthesize glutamate, but it is involved in the utilization of arginine, and proline as carbon or nitrogen source. The catabolic RocG is essential for controlling gltAB expression via an inhibitory interactions with the transcriptional regulator GltC in response to the availability of sugars. This Bacillus subtilis (strain 168) protein is Catabolic NAD-specific glutamate dehydrogenase RocG.